A 218-amino-acid chain; its full sequence is MRKALKKFLKNSKCLLSIITILLYWYLRFVYFTSRQKFIFYDNRNKEKFLNEQGVIFAFWHNMLALSPAMFTGHRNVYALISPHLDGKILNALVGKFGCQVIVGSTNKNSIVALRNIIGKLSQGANIIVTPDGPKGPVYKVNSGITEIAYRYNKKLIPIVSSTSRCFRLKSWDKLIIPIPFGTIKIIVGSPLALVADKVKNHLNLEKQLKSLTESLKK.

The next 2 helical transmembrane spans lie at 14–34 and 175–195; these read CLLS…YFTS and LIIP…LALV.

The protein to H.pylori HP0270.

Its subcellular location is the cell membrane. This is an uncharacterized protein from Rickettsia prowazekii (strain Madrid E).